The chain runs to 373 residues: 8-amino-7-oxononanoate synthase (373 aa).

Arginine 16 contributes to the substrate binding site. Residue 93–94 (GF) coordinates pyridoxal 5'-phosphate. Position 118 (histidine 118) interacts with substrate. Pyridoxal 5'-phosphate is bound by residues serine 165, 190-193 (DEAH), and 222-225 (TFSK). Position 225 is an N6-(pyridoxal phosphate)lysine (lysine 225). Residue threonine 334 participates in substrate binding.

It belongs to the class-II pyridoxal-phosphate-dependent aminotransferase family. BioF subfamily. In terms of assembly, homodimer. Pyridoxal 5'-phosphate serves as cofactor.

The catalysed reaction is 6-carboxyhexanoyl-[ACP] + L-alanine + H(+) = (8S)-8-amino-7-oxononanoate + holo-[ACP] + CO2. The protein operates within cofactor biosynthesis; biotin biosynthesis. In terms of biological role, catalyzes the decarboxylative condensation of pimeloyl-[acyl-carrier protein] and L-alanine to produce 8-amino-7-oxononanoate (AON), [acyl-carrier protein], and carbon dioxide. This chain is 8-amino-7-oxononanoate synthase, found in Helicobacter pylori (strain J99 / ATCC 700824) (Campylobacter pylori J99).